Here is a 348-residue protein sequence, read N- to C-terminus: Rhodopsin (348 aa).

The residue at position 1 (methionine 1) is an N-acetylmethionine. Over 1 to 36 the chain is Extracellular; that stretch reads MNGTEGPNFYVPFSNKTGVVRSPFEEPQYYLAEPWQ. Asparagine 2 and asparagine 15 each carry an N-linked (GlcNAc...) asparagine glycan. Residues 37-61 form a helical membrane-spanning segment; sequence FSCLAAYMFMLIVLGFPINFLTLYV. Over 62–73 the chain is Cytoplasmic; it reads TIQHKKLRTPLN. The helical transmembrane segment at 74–96 threads the bilayer; that stretch reads YILLNLAIADLFMVFGGFTTTLY. The Extracellular portion of the chain corresponds to 97 to 110; the sequence is TSLHGYFVFGPTGC. Cysteines 110 and 187 form a disulfide. Residues 111-133 form a helical membrane-spanning segment; sequence DLEGFFATLGGEIALWSLVVLAI. Residues 134-136 carry the 'Ionic lock' involved in activated form stabilization motif; sequence ERY. The Cytoplasmic segment spans residues 134–152; sequence ERYIVVCKPMSNFRFGENH. Residues 153-173 form a helical membrane-spanning segment; that stretch reads AIMGVAFTWVMALACAAPPLV. Residues 174–202 are Extracellular-facing; sequence GWSRYIPEGMQCSCGIDYYTLKPEVNNES. Zn(2+) is bound at residue glutamate 201. A helical membrane pass occupies residues 203–224; sequence FVIYMFVVHFTIPMVVIFFCYG. At 225–252 the chain is on the cytoplasmic side; that stretch reads QLVFTVKEAAAQQQESATTQKAEKEVTR. A helical membrane pass occupies residues 253-274; that stretch reads MVIIMVIAFLICWLPYAGVAFY. Residues 275 to 286 lie on the Extracellular side of the membrane; that stretch reads IFTHQGSNFGPI. Glutamine 279 contributes to the Zn(2+) binding site. The helical transmembrane segment at 287–308 threads the bilayer; the sequence is LMTLPAFFAKTSAVYNPVIYIM. Lysine 296 is subject to N6-(retinylidene)lysine. Residues 309 to 348 are Cytoplasmic-facing; it reads LNKQFRTCMLTTLCCGKIPLGDDEASATASKTETSQVAPA. 2 S-palmitoyl cysteine lipidation sites follow: cysteine 322 and cysteine 323. Residues 330–348 are interaction with SAG; the sequence is DDEASATASKTETSQVAPA. Serine 334 is modified (phosphoserine). Phosphothreonine is present on threonine 336. Serine 338 is subject to Phosphoserine. Threonine 340 and threonine 342 each carry phosphothreonine. Serine 343 carries the phosphoserine modification.

Belongs to the G-protein coupled receptor 1 family. Opsin subfamily. As to quaternary structure, homodimer. May form a complex composed of RHO, GRK1 and RCVRN in a Ca(2+)-dependent manner; RCVRN prevents the interaction between GRK1 and RHO. Interacts with GRK1. Interacts (phosphorylated form) with SAG. Interacts with GNAT1. Interacts with GNAT3. SAG and G-proteins compete for a common binding site. Interacts with PRCD; the interaction promotes PRCD stability. Forms a complex with ASAP1 and ARF4. Forms a complex with ASAP1, RAB11A, Rabin8/RAB3IP, ARF4 and RAB11FIP3; the complex regulates Golgi-to-cilia rhodopsin/RHO transport in photoreceptors. Post-translationally, phosphorylated on some or all of the serine and threonine residues present in the C-terminal region. In terms of processing, contains one covalently linked retinal chromophore. Upon light absorption, the covalently bound 11-cis-retinal is converted to all-trans-retinal. After hydrolysis of the Schiff base and release of the covalently bound all-trans-retinal, active rhodopsin is regenerated by binding of a fresh molecule of 11-cis-retinal.

The protein localises to the membrane. Its subcellular location is the cell projection. The protein resides in the cilium. It localises to the photoreceptor outer segment. Functionally, photoreceptor required for image-forming vision at low light intensity. Required for photoreceptor cell viability after birth. Light-induced isomerization of 11-cis to all-trans retinal triggers a conformational change that activates signaling via G-proteins. Subsequent receptor phosphorylation mediates displacement of the bound G-protein alpha subunit by the arrestin SAG and terminates signaling. In Caluromys philander (Bare-tailed woolly opossum), this protein is Rhodopsin (RHO).